We begin with the raw amino-acid sequence, 956 residues long: Ubiquitin carboxyl-terminal hydrolase CYLD (956 aa).

Residues 106-593 form an interaction with TRIP region; the sequence is CEERFSLFKN…LEIMIGKKKG (488 aa). 2 CAP-Gly domains span residues 153-198 and 253-286; these read LAER…VFVA and DVLP…VQLC. The disordered stretch occupies residues 309-353; it reads SVTQERRPPKLAFMSRGVGDKGSSSHNKPKATGSTSDPGNRNRSE. The segment covering 330–349 has biased composition (polar residues); the sequence is GSSSHNKPKATGSTSDPGNR. Residue serine 387 is modified to Phosphoserine. A disordered region spans residues 392–411; sequence STDFDRSSPPLQPPPVNSLT. Positions 394–469 are interaction with TRAF2; the sequence is DFDRSSPPLQ…LAMPPGNSHG (76 aa). Phosphoserine occurs at positions 418 and 422. Residues 470–554 form an interaction with IKBKG/NEMO region; the sequence is LEVGSLAEVK…FASLQPVSNQ (85 aa). Residues 492–535 enclose the CAP-Gly 3 domain; sequence GQPPGLNEVLAGLELEDECAGCTDGTFRGTRYFTCALKKALFVK. In terms of domain architecture, USP spans 592 to 950; it reads KGIQGHYNSC…DAYMCMYQSP (359 aa). Cysteine 601 functions as the Nucleophile in the catalytic mechanism. Residues 781 to 833 form a B-box region; that stretch reads LEDTPRQCRICGGLAMYECRECYDDPDISAGKIKQFCKTCNTQVHLHPKRLNH. Zn(2+) is bound by residues cysteine 788, cysteine 791, cysteine 799, cysteine 802, cysteine 817, cysteine 820, histidine 825, and histidine 833. Histidine 871 (proton acceptor) is an active-site residue.

The protein belongs to the peptidase C19 family. Interacts (via CAP-Gly domain) with IKBKG/NEMO (via proline-rich C-terminal region). Interacts with TRAF2 and TRIP. Interacts with PLK1, DVL1, DVL3, MAVS, TBK1, IKKE and RIGI. Interacts (via CAP-Gly domain) with microtubules. Interacts with HDAC6 and BCL3. Interacts with MAP3K7. Identified in a complex with TRAF6 and SQSTM1. Interacts with OPTN and SQSTM1. Interacts with CEP350. Interacts with RNF31; the interaction is indirect and is mediated via SPATA2. Interacts with SPATA2 (via the PUB domain); the interaction is direct and recruits CYLD to the LUBAC complex, thereby regulating TNF-alpha-induced necroptosis. In terms of processing, ubiquitinated. Polyubiquitinated in hepatocytes treated with palmitic acid. Ubiquitination is mediated by E3 ligase TRIM47 and leads to proteasomal degradation. Phosphorylated on several serine residues by IKKA and/or IKKB in response to immune stimuli. Phosphorylation requires IKBKG. Phosphorylation abolishes TRAF2 deubiquitination, interferes with the activation of Jun kinases, and strongly reduces CD40-dependent gene activation by NF-kappa-B. Detected in fetal brain, testis, and skeletal muscle, and at a lower level in adult brain, leukocytes, liver, heart, kidney, spleen, ovary and lung. Isoform 2 is found in all tissues except kidney.

It localises to the cytoplasm. The protein localises to the perinuclear region. Its subcellular location is the cytoskeleton. The protein resides in the cell membrane. It is found in the microtubule organizing center. It localises to the centrosome. The protein localises to the spindle. Its subcellular location is the cilium basal body. It carries out the reaction Thiol-dependent hydrolysis of ester, thioester, amide, peptide and isopeptide bonds formed by the C-terminal Gly of ubiquitin (a 76-residue protein attached to proteins as an intracellular targeting signal).. Inhibited by phosphorylation at serine residues. In terms of biological role, deubiquitinase that specifically cleaves 'Lys-63'- and linear 'Met-1'-linked polyubiquitin chains and is involved in NF-kappa-B activation and TNF-alpha-induced necroptosis. Negatively regulates NF-kappa-B activation by deubiquitinating upstream signaling factors. Contributes to the regulation of cell survival, proliferation and differentiation via its effects on NF-kappa-B activation. Negative regulator of Wnt signaling. Inhibits HDAC6 and thereby promotes acetylation of alpha-tubulin and stabilization of microtubules. Plays a role in the regulation of microtubule dynamics, and thereby contributes to the regulation of cell proliferation, cell polarization, cell migration, and angiogenesis. Required for normal cell cycle progress and normal cytokinesis. Inhibits nuclear translocation of NF-kappa-B. Plays a role in the regulation of inflammation and the innate immune response, via its effects on NF-kappa-B activation. Dispensable for the maturation of intrathymic natural killer cells, but required for the continued survival of immature natural killer cells. Negatively regulates TNFRSF11A signaling and osteoclastogenesis. Involved in the regulation of ciliogenesis, allowing ciliary basal bodies to migrate and dock to the plasma membrane; this process does not depend on NF-kappa-B activation. Ability to remove linear ('Met-1'-linked) polyubiquitin chains regulates innate immunity and TNF-alpha-induced necroptosis: recruited to the LUBAC complex via interaction with SPATA2 and restricts linear polyubiquitin formation on target proteins. Regulates innate immunity by restricting linear polyubiquitin formation on RIPK2 in response to NOD2 stimulation. Involved in TNF-alpha-induced necroptosis by removing linear ('Met-1'-linked) polyubiquitin chains from RIPK1, thereby regulating the kinase activity of RIPK1. Negatively regulates intestinal inflammation by removing 'Lys-63' linked polyubiquitin chain of NLRP6, thereby reducing the interaction between NLRP6 and PYCARD/ASC and formation of the NLRP6 inflammasome. Does not catalyze deubiquitination of heterotypic 'Lys-63'-/'Lys-48'-linked branched ubiquitin chains. Removes 'Lys-63' linked polyubiquitin chain of MAP3K7, which inhibits phosphorylation and blocks downstream activation of the JNK-p38 kinase cascades. Also removes 'Lys-63'-linked polyubiquitin chains of MAP3K1 and MA3P3K3, which inhibit their interaction with MAP2K1 and MAP2K2. This chain is Ubiquitin carboxyl-terminal hydrolase CYLD, found in Homo sapiens (Human).